The following is a 144-amino-acid chain: Large ribosomal subunit protein uL11 (144 aa).

Belongs to the universal ribosomal protein uL11 family. As to quaternary structure, part of the ribosomal stalk of the 50S ribosomal subunit. Interacts with L10 and the large rRNA to form the base of the stalk. L10 forms an elongated spine to which L12 dimers bind in a sequential fashion forming a multimeric L10(L12)X complex. In terms of processing, one or more lysine residues are methylated.

In terms of biological role, forms part of the ribosomal stalk which helps the ribosome interact with GTP-bound translation factors. This chain is Large ribosomal subunit protein uL11, found in Streptomyces sp. (strain FRI-5).